Here is a 998-residue protein sequence, read N- to C-terminus: GGVSVPGPMGPSGPRGLPGPPGSPGPQGFQGPPGSSGPMGPRGPPGPPGKNGDDGEAGKPGRPGERGPPGPQGARGLPGTAGLPGMKGHRGFSGLDGAKGDAGPAGPKQMGPRGLPGERGRPGASGPAGARGNDGATGAAGPPGPTGPAGPPGFPGAVGAKGEAGPQGARGSEGPQGVRGEPGPPGPAGAAGPAGNPGADGQPGAKGANGAPGIAGAPGFPGARGPSGPQGPSGAPGPKGNSGEPGAPGNKGDTGAKGEPGPTGIQGPPGPAGEEGKRGARGEPGPTGLPGPPGERGGPGSRGFPGADGIAGPKGPAGERGSPGPAGPKGSPGEAGRPGEAGLPGAKGLTGSPGSPGPDGKTGPPGPAGQDGRPGPAGPPGARGQAGVMGFPGPKGAAGEPGKAGERGVPGPPGAVGPAGKDGEAGAQGPPGPAGPAGERGEQGPAGSPGFQGLPGPAGPPGEAGKPGEQGVPGDLGAPGPSGARGERGFPGERGVQGPPGPAGPRGNGAPGNDGAKGDAGAPGAPGSQGAPGLQGMPGERGAAGLPGPKGDRGDAGPKGADGAPGKDGVRGLTGPIGPPGPAGAAGDKGETGPSGPAGPTGARGAPGDRGEPGPPGPAGFAGPPGADGQPGAKGEPGDAGAKGDAGPPGPAGPTGPPGPIGNVGAPGPKGARGSAGPPGATGFPGAAGRVGPPGPSGNAGPPGPPGPVGKEGGKGPRGETGPAGRPGEVGPPGPPGPGEKGSPGADGPAGAPGTPGPQGIAGQRGVVGLPGQRGERGFPGLPGPSGEPGKQGPSGSSGERGPPGPMGPPGLAGPPGEAGREGSPGAEGSPGRDGSPGPKGDRGETGPGPPGAPGAPGAPGPVGPAGKSGDRGETGPSGPAGPAGPAGARGPAGPQGPRGDKGETGEQGDRGIKGHRGFSGLQGPAGPPGSPGEQGPSGASGPAGPRGPPGSAGTPGKDGLNGLPGPIGPPGPRGRTGDAGPVGPPGPPGPPGPPGPP.

Residues 1–998 are disordered; it reads GGVSVPGPMG…PGPPGPPGPP (998 aa). Residues Pro-18, Pro-21, Pro-24, Pro-33, Pro-48, Pro-63, Pro-69, Pro-78, and Pro-84 each carry the 4-hydroxyproline modification. Residues 26–39 are compositionally biased toward low complexity; it reads PQGFQGPPGSSGPM. The segment covering 51 to 65 has biased composition (basic and acidic residues); sequence NGDDGEAGKPGRPGE. At Lys-87 the chain carries 5-hydroxylysine; alternate. Residue Lys-87 is glycosylated (O-linked (Gal...) hydroxylysine; alternate). Ser-93 is modified (phosphoserine). Over residues 101 to 115 the composition is skewed to low complexity; sequence DAGPAGPKQMGPRGL. Residues Pro-116, Pro-122, Pro-143, Pro-152, Pro-155, Pro-182, Pro-185, Pro-197, Pro-203, Pro-212, Pro-218, Pro-221, and Pro-236 each carry the 4-hydroxyproline modification. Over residues 122 to 140 the composition is skewed to low complexity; it reads PGASGPAGARGNDGATGAA. A compositionally biased stretch (pro residues) spans 142 to 154; sequence PPGPTGPAGPPGF. Low complexity predominate over residues 188-238; that stretch reads AGAAGPAGNPGADGQPGAKGANGAPGIAGAPGFPGARGPSGPQGPSGAPGP. Residue Lys-239 is modified to 5-hydroxylysine. Pro-245, Pro-248, Pro-260, Pro-269, Pro-284, Pro-290, Pro-299, and Pro-305 each carry 4-hydroxyproline. Residues 294–303 are compositionally biased toward gly residues; the sequence is GERGGPGSRG. 5-hydroxylysine is present on Lys-314. 28 positions are modified to 4-hydroxyproline: Pro-323, Pro-332, Pro-338, Pro-344, Pro-353, Pro-356, Pro-365, Pro-374, Pro-380, Pro-392, Pro-401, Pro-410, Pro-413, Pro-431, Pro-449, Pro-455, Pro-461, Pro-467, Pro-473, Pro-479, Pro-491, Pro-500, Pro-511, Pro-523, Pro-526, Pro-532, Pro-538, and Pro-547. Residues 347 to 401 show a composition bias toward low complexity; the sequence is KGLTGSPGSPGPDGKTGPPGPAGQDGRPGPAGPPGARGQAGVMGFPGPKGAAGEP. Residues 443-470 are compositionally biased toward low complexity; it reads QGPAGSPGFQGLPGPAGPPGEAGKPGEQ. The segment covering 513-535 has biased composition (low complexity); that stretch reads NDGAKGDAGAPGAPGSQGAPGLQ. Lys-559 carries the post-translational modification 5-hydroxylysine. 4-hydroxyproline is present on residues Pro-565 and Pro-580. Residues 592–606 are compositionally biased toward low complexity; the sequence is TGPSGPAGPTGARGA. Ser-595 is modified (phosphoserine). 8 positions are modified to 4-hydroxyproline: Pro-607, Pro-613, Pro-616, Pro-625, Pro-631, Pro-649, Pro-658, and Pro-667. Over residues 619–646 the composition is skewed to low complexity; sequence AGFAGPPGADGQPGAKGEPGDAGAKGDA. Over residues 648–660 the composition is skewed to pro residues; sequence PPGPAGPTGPPGP. A 5-hydroxylysine modification is found at Lys-670. The segment covering 675–691 has biased composition (low complexity); sequence SAGPPGATGFPGAAGRV. A 4-hydroxyproline mark is found at Pro-679 and Pro-685. The residue at position 693 (Pro-693) is a 3-hydroxyproline. Residues Pro-694, Pro-703, Pro-706, Pro-727, Pro-736, Pro-744, Pro-753, Pro-771, Pro-780, Pro-783, Pro-789, Pro-804, Pro-810, Pro-816, Pro-825, and Pro-831 each carry the 4-hydroxyproline modification. Residues 720-729 are compositionally biased toward low complexity; that stretch reads ETGPAGRPGE. Residues 741–762 are compositionally biased toward low complexity; the sequence is KGSPGADGPAGAPGTPGPQGIA. The segment covering 803–813 has biased composition (pro residues); the sequence is PPGPMGPPGLA. A compositionally biased stretch (low complexity) spans 815–830; sequence PPGEAGREGSPGAEGS. Lys-840 carries the 5-hydroxylysine modification. Residues 848–863 are compositionally biased toward pro residues; sequence PGPPGAPGAPGAPGPV. 4-hydroxyproline is present on residues Pro-851, Pro-854, and Pro-857. Low complexity predominate over residues 884 to 898; that stretch reads AGPAGARGPAGPQGP. Positions 899–913 are enriched in basic and acidic residues; the sequence is RGDKGETGEQGDRGI. Residue Lys-902 is modified to 5-hydroxylysine. Lys-914 carries the post-translational modification 5-hydroxylysine; alternate. O-linked (Gal...) hydroxylysine; alternate glycosylation is present at Lys-914. A 4-hydroxyproline mark is found at Pro-929, Pro-932, Pro-950, and Pro-965. Residues 932 to 965 are compositionally biased toward low complexity; sequence PGEQGPSGASGPAGPRGPPGSAGTPGKDGLNGLP. Pro-970 carries the post-translational modification 3-hydroxyproline. Residue Pro-971 is modified to 4-hydroxyproline. A compositionally biased stretch (pro residues) spans 983–998; that stretch reads VGPPGPPGPPGPPGPP. Residue Pro-985 is modified to 3-hydroxyproline. Position 986 is a 4-hydroxyproline (Pro-986). Pro-988 carries the post-translational modification 3-hydroxyproline. Pro-989 bears the 4-hydroxyproline mark. Pro-991 carries the post-translational modification 3-hydroxyproline. Residues Pro-992, Pro-995, and Pro-998 each carry the 4-hydroxyproline modification.

The protein belongs to the fibrillar collagen family. Trimers of one alpha 2(I) and two alpha 1(I) chains. Post-translationally, contains mostly 4-hydroxyproline. Proline residues at the third position of the tripeptide repeating unit (G-X-Y) are hydroxylated in some or all of the chains. In terms of processing, contains 3-hydroxyproline at a few sites. This modification occurs on the first proline residue in the sequence motif Gly-Pro-Hyp, where Hyp is 4-hydroxyproline. Lysine residues at the third position of the tripeptide repeating unit (G-X-Y) are 5-hydroxylated in some or all of the chains. Post-translationally, O-glycosylated on hydroxylated lysine residues. The O-linked glycan consists of a Glc-Gal disaccharide. As to expression, expressed in bones.

It is found in the secreted. Its subcellular location is the extracellular space. The protein localises to the extracellular matrix. Type I collagen is a member of group I collagen (fibrillar forming collagen). This Glyptodon sp. (strain SLP-2019) (Giant armadillo) protein is Collagen alpha-1(I) chain.